Reading from the N-terminus, the 415-residue chain is 2-oxoadipate dioxygenase/decarboxylase (415 aa).

2-oxoadipate-binding residues include H66, R70, and H225. Residue H66 coordinates Fe(2+). Fe(2+)-binding residues include H225 and E296. A361 contributes to the 2-oxoadipate binding site.

It belongs to the 2-oxoadipate dioxygenase/decarboxylase family. Fe(2+) is required as a cofactor.

It catalyses the reaction 2-oxoadipate + O2 = (R)-2-hydroxyglutarate + CO2. Functionally, catalyzes the decarboxylation and hydroxylation of 2-oxoadipate (2OA) to form D-2-hydroxyglutarate (D-2-HGA). This Mycobacterium bovis (strain ATCC BAA-935 / AF2122/97) protein is 2-oxoadipate dioxygenase/decarboxylase.